Here is a 317-residue protein sequence, read N- to C-terminus: MASPAFAVNGMFTPVKLSGSFTASMPVDSKPAASATGVRMVVDPLQRKYQSIGKIGVDYSRPKKLATYVRSGYSVGMEFPNTPSMAGHYSLTDCDKAGGAAKILMKYDEYCAKGMLQVGKRAACRTGVYTTKCTEGTQPQMAFDVRVFNRTQAFRQAQKPVAARLREQYEARKACFVLAHNCSREEAQFKEMPMSCATFLASKMEATGACYRTVRPTSVAEDYMAGSVRAQLYTKLNPKGVYGVGACEDGHAKGDADQRRVIALASEYRAAAQSPSTVTGQQYKSAQLATQLFAHDCHHEQEQIYEYPAVAAAMCRY.

The transit peptide at methionine 1–methionine 40 directs the protein to the chloroplast. Phycourobilin-binding residues include cysteine 94 and cysteine 133. Cysteine 210 is a (2R,3E)-phycoerythrobilin binding site. Residue cysteine 297 coordinates phycourobilin.

As to quaternary structure, heteromer of 1 alpha, 1 beta and 2 gamma chains. Contains four covalently linked bilin chromophores.

It localises to the plastid. It is found in the chloroplast thylakoid membrane. Critical for the incorporation of phycoerythrin in the phycobilisome complex. This is R-phycoerythrin gamma chain, chloroplastic from Aglaothamnion neglectum (Red alga).